We begin with the raw amino-acid sequence, 700 residues long: MTMFNTIKREFQYGNQQVVIETGRIARQANSILVHMGGVTVLVAAVVKSDAKEGQNFFPLTVNYQEKMYAAGKIPGAYGKREGRASESETLTSRLIDRPIRPLFPEGYVNEIQITATVVSSDKTQSADIAALIGASAALAISDAPFNGPVAAARVGFINGEYVLNPTLEELKESDLDLVVAGTKSAVLMVESEAAELSEDQMLGAVLYGHQQQQIVIDNIASMAAEIGTAKQQYTAPVRDQALETGMKEQFGAQVSDAYTITDKQARYSKLNEIKDAAIVALAGDAESESYSDTVSELKEIYNDLKYRTVRDNILSGKPRIDGRDLETVRALDVQVGVLPFTHGSALFTRGETQALVTTTLGNTRDVNMIDSLAGTIRDHFMLHYNFPHFSVGETGREGIPKRREIGHGRLARRGVQAMLPDSDRFPYVIRVVSEITESNGSSSMASVCGASLALMDAGVPIKAPVAGIAMGLVKEGERFAVLSDILGDEDHLGDMDFKVAGSKDGITALQMDIKIEGITPDIMEQALKQAHAGRIHILDAMNKVLPESRTEINAHAPNYAVIEINPDKIRDVIGKGGATIRQLTEETGAVIDIDDAGTIRIFGENKAATKAAIAKIEAITAEVEVGKTYEGTVARIVDFGAFVNVLPNTDGLVHISQIADERVENVSDYLKEGQIVKVLVQDVDNRGRIKLTMKGIEQS.

Residues Asp491 and Asp497 each coordinate Mg(2+). A KH domain is found at 558–617; that stretch reads PNYAVIEINPDKIRDVIGKGGATIRQLTEETGAVIDIDDAGTIRIFGENKAATKAAIAKI. Residues 627-695 enclose the S1 motif domain; that stretch reads GKTYEGTVAR…NRGRIKLTMK (69 aa).

This sequence belongs to the polyribonucleotide nucleotidyltransferase family. In terms of assembly, component of the RNA degradosome, which is a multiprotein complex involved in RNA processing and mRNA degradation. Requires Mg(2+) as cofactor.

Its subcellular location is the cytoplasm. It catalyses the reaction RNA(n+1) + phosphate = RNA(n) + a ribonucleoside 5'-diphosphate. Involved in mRNA degradation. Catalyzes the phosphorolysis of single-stranded polyribonucleotides processively in the 3'- to 5'-direction. The polypeptide is Polyribonucleotide nucleotidyltransferase (Psychrobacter arcticus (strain DSM 17307 / VKM B-2377 / 273-4)).